Here is a 142-residue protein sequence, read N- to C-terminus: ATP synthase epsilon chain (142 aa).

The protein belongs to the ATPase epsilon chain family. F-type ATPases have 2 components, CF(1) - the catalytic core - and CF(0) - the membrane proton channel. CF(1) has five subunits: alpha(3), beta(3), gamma(1), delta(1), epsilon(1). CF(0) has three main subunits: a, b and c.

The protein resides in the cell inner membrane. Produces ATP from ADP in the presence of a proton gradient across the membrane. In Histophilus somni (strain 2336) (Haemophilus somnus), this protein is ATP synthase epsilon chain.